Here is a 425-residue protein sequence, read N- to C-terminus: Histidine--tRNA ligase 1 (425 aa).

Belongs to the class-II aminoacyl-tRNA synthetase family. Homodimer.

It is found in the cytoplasm. The catalysed reaction is tRNA(His) + L-histidine + ATP = L-histidyl-tRNA(His) + AMP + diphosphate + H(+). This is Histidine--tRNA ligase 1 from Bacillus thuringiensis subsp. konkukian (strain 97-27).